Here is a 129-residue protein sequence, read N- to C-terminus: Glycine cleavage system H protein (129 aa).

Positions 24–106 constitute a Lipoyl-binding domain; sequence SYTVGISEHA…FGDGWFFRVM (83 aa). Lys-65 is modified (N6-lipoyllysine).

It belongs to the GcvH family. As to quaternary structure, the glycine cleavage system is composed of four proteins: P, T, L and H. It depends on (R)-lipoate as a cofactor.

In terms of biological role, the glycine cleavage system catalyzes the degradation of glycine. The H protein shuttles the methylamine group of glycine from the P protein to the T protein. This Shewanella halifaxensis (strain HAW-EB4) protein is Glycine cleavage system H protein.